Reading from the N-terminus, the 367-residue chain is Innexin inx4 (367 aa).

Topologically, residues 1 to 21 are cytoplasmic; it reads MYAAVKPLSKYLQFKSVHIYD. Residues 22–42 form a helical membrane-spanning segment; it reads AIFTLHSKVTVALLLACTFLL. The Extracellular segment spans residues 43-110; that stretch reads SSKQYFGDPI…PENRNYITYY (68 aa). Residues 111-131 form a helical membrane-spanning segment; that stretch reads QWVVLVLLLESFVFYMPAFLW. Topologically, residues 132 to 186 are cytoplasmic; that stretch reads KIWEGGRLKHLCDDFHKMAVCKDKSRTHLRVLVNYFSSDYKETHFRYFVSYVFCE. A helical membrane pass occupies residues 187–207; that stretch reads ILNLSISILNFLLLDVFFGGF. Residues 208-268 lie on the Extracellular side of the membrane; the sequence is WGRYRNALLS…LLPLNILNEK (61 aa). Residues 269-289 form a helical membrane-spanning segment; sequence IFAFLWIWFILVAMLISLKFL. The Cytoplasmic portion of the chain corresponds to 290 to 367; the sequence is YRLATVLYPG…IKIPPGADKI (78 aa).

Belongs to the pannexin family. Expressed in nurse cells and oocyte during oogenesis. Uniform expression in imaginal wing disk and low expression in developing imaginal CNS. Expressed in embryonic pole cells and primordial germ cells.

It localises to the cell membrane. It is found in the cell junction. Its subcellular location is the gap junction. Functionally, structural component of the gap junctions in germline cells. Required for differentiation and survival of germline cysts in females and of spermatogonia in males; gap junctional communication between spermatogonia and somatic cyst cells may be required for normal differentiation and survival of spermatogonia. This is Innexin inx4 (zpg) from Drosophila melanogaster (Fruit fly).